Consider the following 517-residue polypeptide: Cytochrome P450 monooxygenase stcB (517 aa).

Residue cysteine 461 participates in heme binding.

It belongs to the cytochrome P450 family. It depends on heme as a cofactor.

It participates in mycotoxin biosynthesis; sterigmatocystin biosynthesis. Functionally, cytochrome P450 monooxygenase; part of the gene cluster that mediates the biosynthesis of sterigmatocystin (ST), a polyketide-derived furanocoumarin which is part of the most toxic and carcinogenic compounds among the known mycotoxins. The first step in the biosynthesis of sterigmatocystin is the production of hexanoate by the fatty acid synthase (FAS) units stcJ and stcK. The polyketide backbone is assembled by the non-reducing polyketide synthase stcA by condensation of the starter hexanoyl-CoA and 7 malonyl-CoA extender units followed by cyclization and release of norsolorinic acid. Norsolorinic acid is the first stable intermediate in the biosynthesis of sterigmatocystin and is converted into averantin (AVN) by the ketoreductase stcE which reduces the hexanoate ketone to an alcohol. Averantin is then oxidized into 5'-hydroxyaverantin (HAVN) by the cytochrome P450 monooxygenase stcF. 5'-hydroxyaverantin is further converted to 5'-oxyaverantin (OAVN) by the 5'-hydroxyaverantin dehydrogenase stcG. The next step is the conversion of OAVN into averufin (AVF) which is catalyzed by a yet to be identified enzyme. The cytochrome P450 monooxygenase stcB and the flavin-binding monooxygenase stcW are both required for the conversion of averufin to 1-hydroxyversicolorone. The esterase stcI probably catalyzes the formation of versiconal hemiacetal acetate from 1-hydroxyversicolorone. The oxydoreductase stcN then probably catalyzes the biosynthetic step from versiconal to versicolorin B (VERB). The next step is performed by the versicolorin B desaturase stcL to produce versicolorin A (VERA). The ketoreductase stcU and the cytochrome P450 monooxygenase stcS are involved in the conversion of versicolorin A to demethylsterigmatocystin. The Baeyer-Villiger oxidas stcQ and the reductase stcR might be involved in the biosynthetic step from versicolorin A to demethylsterigmatocystin. The final step in the biosynthesis of sterigmatocystin is the methylation of demethylsterigmatocystin catalyzed by the methyltransferase stcP. The sequence is that of Cytochrome P450 monooxygenase stcB from Emericella nidulans (strain FGSC A4 / ATCC 38163 / CBS 112.46 / NRRL 194 / M139) (Aspergillus nidulans).